The following is a 341-amino-acid chain: Ketol-acid reductoisomerase (NADP(+)) (341 aa).

The 181-residue stretch at 2 to 182 (TDIVYDKDAD…GGLRAGGIRT (181 aa)) folds into the KARI N-terminal Rossmann domain. Residues 25–28 (YGSQ), K48, S51, S53, and 83–86 (DQHQ) each bind NADP(+). The active site involves H108. G134 is a binding site for NADP(+). Residues 183–328 (TFTEETETDL…RELRKLFAWN (146 aa)) enclose the KARI C-terminal knotted domain. 4 residues coordinate Mg(2+): D191, E195, E227, and E231. S252 contacts substrate.

It belongs to the ketol-acid reductoisomerase family. Mg(2+) is required as a cofactor.

It carries out the reaction (2R)-2,3-dihydroxy-3-methylbutanoate + NADP(+) = (2S)-2-acetolactate + NADPH + H(+). The enzyme catalyses (2R,3R)-2,3-dihydroxy-3-methylpentanoate + NADP(+) = (S)-2-ethyl-2-hydroxy-3-oxobutanoate + NADPH + H(+). The protein operates within amino-acid biosynthesis; L-isoleucine biosynthesis; L-isoleucine from 2-oxobutanoate: step 2/4. Its pathway is amino-acid biosynthesis; L-valine biosynthesis; L-valine from pyruvate: step 2/4. In terms of biological role, involved in the biosynthesis of branched-chain amino acids (BCAA). Catalyzes an alkyl-migration followed by a ketol-acid reduction of (S)-2-acetolactate (S2AL) to yield (R)-2,3-dihydroxy-isovalerate. In the isomerase reaction, S2AL is rearranged via a Mg-dependent methyl migration to produce 3-hydroxy-3-methyl-2-ketobutyrate (HMKB). In the reductase reaction, this 2-ketoacid undergoes a metal-dependent reduction by NADPH to yield (R)-2,3-dihydroxy-isovalerate. The chain is Ketol-acid reductoisomerase (NADP(+)) from Clavibacter michiganensis subsp. michiganensis (strain NCPPB 382).